The following is a 452-amino-acid chain: Enolase (452 aa).

Position 167 (glutamine 167) interacts with (2R)-2-phosphoglycerate. Glutamate 209 (proton donor) is an active-site residue. Mg(2+)-binding residues include aspartate 250, glutamate 307, and aspartate 334. Residues lysine 359, arginine 388, serine 389, and lysine 410 each contribute to the (2R)-2-phosphoglycerate site. Residue lysine 359 is the Proton acceptor of the active site.

The protein belongs to the enolase family. Requires Mg(2+) as cofactor.

It localises to the cytoplasm. It is found in the secreted. The protein resides in the cell surface. The catalysed reaction is (2R)-2-phosphoglycerate = phosphoenolpyruvate + H2O. Its pathway is carbohydrate degradation; glycolysis; pyruvate from D-glyceraldehyde 3-phosphate: step 4/5. Its function is as follows. Catalyzes the reversible conversion of 2-phosphoglycerate (2-PG) into phosphoenolpyruvate (PEP). It is essential for the degradation of carbohydrates via glycolysis. The polypeptide is Enolase (Mesomycoplasma hyopneumoniae (strain 232) (Mycoplasma hyopneumoniae)).